The following is a 523-amino-acid chain: uncharacterized protein (523 aa).

The Radical SAM core domain maps to 193 to 447 (RKCSGCGNCR…ALKRRMIGKR (255 aa)). Residues Cys-212, Cys-220, and Cys-223 each contribute to the [4Fe-4S] cluster site.

[4Fe-4S] cluster serves as cofactor.

This is an uncharacterized protein from Methanopyrus kandleri (strain AV19 / DSM 6324 / JCM 9639 / NBRC 100938).